The primary structure comprises 177 residues: Cytochrome c oxidase assembly protein CtaG (177 aa).

The Cytoplasmic portion of the chain corresponds to 1-8 (MTQKAKNT). A helical; Signal-anchor for type II membrane protein transmembrane segment spans residues 9-29 (IYLLILIILSMLCLVYASVPL). The Periplasmic portion of the chain corresponds to 30–177 (YSIFCKVTGY…TFFKYKENTK (148 aa)).

The protein belongs to the COX11/CtaG family.

It localises to the cell inner membrane. Exerts its effect at some terminal stage of cytochrome c oxidase synthesis, probably by being involved in the insertion of the copper B into subunit I. The polypeptide is Cytochrome c oxidase assembly protein CtaG (Ehrlichia ruminantium (strain Welgevonden)).